The sequence spans 338 residues: Acetylcholinesterase (338 aa).

The N-linked (GlcNAc...) asparagine glycan is linked to Asn-8. Ser-99 acts as the Acyl-ester intermediate in catalysis. Cys-153 and Cys-164 form a disulfide bridge. The active-site Charge relay system is Glu-226.

It belongs to the type-B carboxylesterase/lipase family.

Its subcellular location is the synapse. It is found in the secreted. The protein resides in the cell membrane. The catalysed reaction is acetylcholine + H2O = choline + acetate + H(+). Its function is as follows. Terminates signal transduction at the neuromuscular junction by rapid hydrolysis of the acetylcholine released into the synaptic cleft. The polypeptide is Acetylcholinesterase (ache) (Myxine glutinosa (Atlantic hagfish)).